A 132-amino-acid chain; its full sequence is Ribonuclease P protein component (132 aa).

The protein belongs to the RnpA family. In terms of assembly, consists of a catalytic RNA component (M1 or rnpB) and a protein subunit.

It catalyses the reaction Endonucleolytic cleavage of RNA, removing 5'-extranucleotides from tRNA precursor.. Its function is as follows. RNaseP catalyzes the removal of the 5'-leader sequence from pre-tRNA to produce the mature 5'-terminus. It can also cleave other RNA substrates such as 4.5S RNA. The protein component plays an auxiliary but essential role in vivo by binding to the 5'-leader sequence and broadening the substrate specificity of the ribozyme. The sequence is that of Ribonuclease P protein component from Marinomonas sp. (strain MWYL1).